Consider the following 652-residue polypeptide: Regulator of DNA class I crossover intermediates 1 (652 aa).

The binds DNA containing a D-loop DNA-binding region spans 1–228; sequence MNWVGGSRSR…APYKRTNSSE (228 aa). Disordered stretches follow at residues 464-512 and 621-652; these read YLES…KATE and EKESSHPEAGSCTEDRTADTTGGQETPTSNSL. The segment covering 467–477 has biased composition (low complexity); the sequence is SSQSSQSASYS. 2 stretches are compositionally biased toward polar residues: residues 478–491 and 639–652; these read PRPTESTFSSSTDL and DTTGGQETPTSNSL.

Interacts with MSH5. Interacts with TEX11. Expressed mainly in testis (at protein level). Expressed in spermatogonia and enriched in spermatocytes; absent in testicular somatic cells (at protein level). No expression or low levels in other tissues.

The protein resides in the chromosome. Involved in recombination, probably acting by stabilizing recombination intermediates during meiotic crossover formation. Required for normal germline development and fertility. Required for meiotic progression, complete chromosomal synapsis and crossover formation. Binds double-stranded DNA. However, also binds branched DNA molecules, such as those containing a D-loop or Holliday junction structure. Probably not required for formation of DNA double-strand breaks (DSBs). Also binds RNA in an RNA structure-independent manner, with a preference for binding 3'-UTR regions of mRNAs; may stabilize bound RNAs. The chain is Regulator of DNA class I crossover intermediates 1 from Mus musculus (Mouse).